The following is a 169-amino-acid chain: Thaumatin-like pathogenesis-related protein 4 (169 aa).

An N-terminal signal peptide occupies residues Met-1–Ala-21.

This sequence belongs to the thaumatin family.

Associated with resistance against stem rust fungi. This is Thaumatin-like pathogenesis-related protein 4 (RASTL-4) from Avena sativa (Oat).